We begin with the raw amino-acid sequence, 209 residues long: Large ribosomal subunit protein uL3 (209 aa).

The protein belongs to the universal ribosomal protein uL3 family. As to quaternary structure, part of the 50S ribosomal subunit. Forms a cluster with proteins L14 and L19.

One of the primary rRNA binding proteins, it binds directly near the 3'-end of the 23S rRNA, where it nucleates assembly of the 50S subunit. This is Large ribosomal subunit protein uL3 from Clostridium botulinum (strain Okra / Type B1).